Consider the following 624-residue polypeptide: MCGIVGYVGRRPAYVVVMDALRRMEYRGYDSSGIALVDGGTLTVRRRAGRLANLEEAVAEMPSTALSGTTGLGHTRWATHGRPTDRNAHPHRDAAGKIAVVHNGIIENFAVLRRELETAGVEFASDTDTEVAAHLVARAYRHGETADDFVGSVLAVLRRLEGHFTLVFANADDPGTLVAARRSTPLVLGIGDNEMFVGSDVAAFIEHTREAVELGQDQAVVITADGYRISDFDGNDGLQAGRDFRPFHIDWDLAAAEKGGYEYFMLKEIAEQPAAVADTLLGHFVGGRIVLDEQRLSDQELREIDKVFVVACGTAYHSGLLAKYAIEHWTRLPVEVELASEFRYRDPVLDRSTLVVAISQSGETADTLEAVRHAKEQKAKVLAICNTNGSQIPRECDAVLYTRAGPEIGVASTKTFLAQIAANYLLGLALAQARGTKYPDEVEREYHELEAMPDLVARVIAATGPVAELAHRFAQSSTVLFLGRHVGYPVALEGALKLKELAYMHAEGFAAGELKHGPIALIEDGLPVIVVMPSPKGSATLHAKLLSNIREIQTRGAVTIVIAEEGDETVRPYADHLIEIPAVSTLLQPLLSTIPLQVFAASVARARGYDVDKPRNLAKSVTVE.

The Nucleophile; for GATase activity role is filled by Cys2. The 224-residue stretch at 2-225 folds into the Glutamine amidotransferase type-2 domain; sequence CGIVGYVGRR…QDQAVVITAD (224 aa). 2 SIS domains span residues 297–436 and 469–614; these read SDQE…ARGT and LAHR…VDKP. Lys619 serves as the catalytic For Fru-6P isomerization activity.

In terms of assembly, homodimer.

The protein localises to the cytoplasm. It catalyses the reaction D-fructose 6-phosphate + L-glutamine = D-glucosamine 6-phosphate + L-glutamate. Catalyzes the first step in hexosamine metabolism, converting fructose-6P into glucosamine-6P using glutamine as a nitrogen source. The chain is Glutamine--fructose-6-phosphate aminotransferase [isomerizing] from Mycobacterium bovis (strain ATCC BAA-935 / AF2122/97).